A 372-amino-acid polypeptide reads, in one-letter code: Aryl-hydrocarbon-interacting protein-like 1 (372 aa).

Residues 53–145 (RQVDQPMHII…DLDELQKEPQ (93 aa)) enclose the PPIase FKBP-type domain. TPR repeat units lie at residues 178–211 (VPVLHGEGNRLFKLGRYEEASSKYQEAIICLRNL), 230–263 (NTLTLNYCQCLLKKEEYYEVLEHTSDILRHHPGI), and 264–297 (VKAYYVRARAHAEVWNEAEAKADLQKVLELEPSM). The disordered stretch occupies residues 315-372 (KQEEERLRCRNMLSQGATQPPTEPPAEPHTAPPAELSTGPPAEPPAELPLSPGHSLQH). Pro residues predominate over residues 335–345 (PTEPPAEPHTA).

As to quaternary structure, interacts with NUB1.

The protein localises to the cytoplasm. It is found in the nucleus. May be important in protein trafficking and/or protein folding and stabilization. This Papio cynocephalus (Yellow baboon) protein is Aryl-hydrocarbon-interacting protein-like 1 (AIPL1).